Consider the following 341-residue polypeptide: Trace amine-associated receptor 13c (341 aa).

The Extracellular segment spans residues 1 to 34 (MDLSSQEYDPSQFCFPAVNNSCLKGTHHVSTQTV). Residue Asn19 is glycosylated (N-linked (GlcNAc...) asparagine). 2 disulfide bridges follow: Cys22-Cys186 and Cys105-Cys186. Residues 35 to 55 (VYLILASAMTVTVLGNSVVII) form a helical membrane-spanning segment. At 56–68 (SIAHFKQLQTPTN) the chain is on the cytoplasmic side. The helical transmembrane segment at 69-89 (ILVMSLALADLLLGLVVMPFS) threads the bilayer. The Extracellular segment spans residues 90-105 (MIRSVDGCWYYGETFC). A helical membrane pass occupies residues 106-126 (LLHTGFDLFLTSVSIFHLIFI). The Cytoplasmic segment spans residues 127–147 (AVDRHQAVCFPLQYPTRITIP). A helical transmembrane segment spans residues 148-168 (VAWVMVMISWSMAAFYSYGVV). The Extracellular portion of the chain corresponds to 169 to 195 (YSKANLEGLEEYIASVYCMGGCTLYFN). A helical membrane pass occupies residues 196-219 (ALWSVLDTLLTFFLPCSVMVGLYA). Residues 220 to 257 (RIFVVAKKHIKSITEANQNENENVFKNPRRSERKAAKT) are Cytoplasmic-facing. Residues 258–278 (LGIVVGAFILCWLPFFINSLV) traverse the membrane as a helical segment. Topologically, residues 279–292 (DPYINFSTPYALFD) are extracellular. Asn283 carries an N-linked (GlcNAc...) asparagine glycan. The helical transmembrane segment at 293-313 (AFGWLGYTNSTLNPIIYGLFY) threads the bilayer. Residues 314–341 (PWFRKTLSLIVTLRIFEPNSSDINLFTV) are Cytoplasmic-facing.

The protein belongs to the G-protein coupled receptor 1 family. As to expression, expressed in olfactory epithelium (at protein level). Detected in a sparse population of olfactory sensory neurons.

The protein resides in the cell membrane. In terms of biological role, olfactory receptor for medium length odd-chained diamines including cadaverine which is generated by bacterial decarboxylation of the basic amino acid lysine and contributes to the odor of decomposing tissue. Mediates pronounced innate aversion behavior to cadaverine. This Danio rerio (Zebrafish) protein is Trace amine-associated receptor 13c.